The chain runs to 296 residues: UDP-N-acetylglucosamine transporter TMEM241 homolog (296 aa).

10 consecutive transmembrane segments (helical) span residues 7-29, 41-61, 67-87, 93-113, 126-146, 147-167, 187-207, 217-237, 248-266, and 272-291; these read AVGLTFCCFYLSSYFTNKYVLSV, WQTLVGGLILHICWKVGWLEI, SDVVLWLPGCALFVGIIYAGS, LPIPVFFTLHNAAEVVSYGFQ, IFSIFLLLLSAGCLPLHDPQF, DADGYFWAVIHLFCVGCYKVF, VFSVVLLGLASHPTGDLISAL, FHSGCCASGILGFLLMLASVK, ASWNFVAKVITAGLSLIYF, and VPLTLCLLAGGLGEAVLVYA.

This sequence belongs to the nucleotide-sugar transporter family. SLC35A subfamily.

The protein localises to the golgi apparatus. It is found in the cis-Golgi network membrane. In terms of biological role, golgi-localized UDP-N-acetylglucosamine (UDP-GlcNAc) transporter that transports UDP-N-acetylglucosamine into Golgi lumen. The sequence is that of UDP-N-acetylglucosamine transporter TMEM241 homolog (tmem241) from Xenopus laevis (African clawed frog).